We begin with the raw amino-acid sequence, 83 residues long: Kunitz-type serine protease inhibitor scutellin-3 (83 aa).

The first 24 residues, 1-24, serve as a signal peptide directing secretion; it reads MSSGGLLLLLGLLTLWEVLTPVSS. Residues 31-81 form the BPTI/Kunitz inhibitor domain; the sequence is CELPADIGPCEDFTGAFHYSPREHECIEFIYGGCKGNANNFNTLEECESAC. Cystine bridges form between Cys-31-Cys-81, Cys-40-Cys-64, and Cys-56-Cys-77.

This sequence belongs to the venom Kunitz-type family. In terms of tissue distribution, expressed by the venom gland.

It is found in the secreted. Functionally, serine protease inhibitor. The protein is Kunitz-type serine protease inhibitor scutellin-3 of Oxyuranus scutellatus scutellatus (Australian taipan).